We begin with the raw amino-acid sequence, 170 residues long: Adenine phosphoribosyltransferase (170 aa).

Belongs to the purine/pyrimidine phosphoribosyltransferase family. Homodimer.

The protein localises to the cytoplasm. It carries out the reaction AMP + diphosphate = 5-phospho-alpha-D-ribose 1-diphosphate + adenine. Its pathway is purine metabolism; AMP biosynthesis via salvage pathway; AMP from adenine: step 1/1. Its function is as follows. Catalyzes a salvage reaction resulting in the formation of AMP, that is energically less costly than de novo synthesis. In Lysinibacillus sphaericus (strain C3-41), this protein is Adenine phosphoribosyltransferase.